An 88-amino-acid chain; its full sequence is EKC/KEOPS complex subunit SPAC4H3.13 (88 aa).

This sequence belongs to the CTAG/PCC1 family. As to quaternary structure, component of the EKC/KEOPS complex composed of at least of SPAP27G11.07c/BUD32, cgi121, gon7, pgp2 and SPAC4H3.13/PCC1; the whole complex dimerizes.

The protein resides in the cytoplasm. It is found in the nucleus. Its subcellular location is the chromosome. It localises to the telomere. Functionally, component of the EKC/KEOPS complex that is required for the formation of a threonylcarbamoyl group on adenosine at position 37 (t(6)A37) in tRNAs that read codons beginning with adenine. The complex is probably involved in the transfer of the threonylcarbamoyl moiety of threonylcarbamoyl-AMP (TC-AMP) to the N6 group of A37. SPAC4H3.13/PCC1 functions as a dimerization module for the complex. The EKC/KEOPS complex also promotes both telomere uncapping and telomere elongation. The complex is required for efficient recruitment of transcriptional coactivators. This chain is EKC/KEOPS complex subunit SPAC4H3.13, found in Schizosaccharomyces pombe (strain 972 / ATCC 24843) (Fission yeast).